Here is a 444-residue protein sequence, read N- to C-terminus: Cell wall mannoprotein PST1 (444 aa).

The N-terminal stretch at 1-19 (MQLHSLIASTALLITSALA) is a signal peptide. Asparagine 57, asparagine 76, asparagine 83, asparagine 86, asparagine 196, asparagine 210, asparagine 228, asparagine 235, asparagine 242, asparagine 263, asparagine 268, asparagine 280, asparagine 292, asparagine 305, and asparagine 329 each carry an N-linked (GlcNAc...) asparagine glycan. 2 stretches are compositionally biased toward low complexity: residues 359–381 (SVKL…SKSS) and 395–418 (KAAA…SSKG). Positions 359–418 (SVKLSSTSKSQSSQTTAKVSKSSSKAEEKKFTSGDIKAAASASSVSSSGASSSSSKSSKG) are disordered. Asparagine 419 carries the GPI-anchor amidated asparagine lipid modification. A propeptide spans 420–444 (AAIMAPIGQTTPLVGLLTAIIMSIM) (removed in mature form).

Belongs to the SPS2 family. In terms of processing, extensively N- and O-mannosylated.

The protein resides in the cell membrane. Its subcellular location is the secreted. It is found in the cell wall. In terms of biological role, has a partially redundant function to ECM33 in cell wall integrity. May be involved in a repair mechanism activated in response to cell wall damage. The protein is Cell wall mannoprotein PST1 (PST1) of Saccharomyces cerevisiae (strain ATCC 204508 / S288c) (Baker's yeast).